Consider the following 601-residue polypeptide: Testis-specific gene 10 protein (601 aa).

Over residues M1–R10 the composition is skewed to basic residues. Disordered stretches follow at residues M1–N20 and V563–L588. The segment at Q459 to L592 is interaction with HIF1A. The span at V563–C573 shows a compositional bias: polar residues. A compositionally biased stretch (basic and acidic residues) spans H574–L588. S591 is subject to Phosphoserine.

The protein belongs to the CEP135/TSGA10 family. As to quaternary structure, interacts with HIF1A. In terms of processing, processed into N-terminal 27-kDa and C-terminal 55-kDa fragments.

The protein localises to the cytoplasm. The protein resides in the cytoskeleton. It localises to the microtubule organizing center. It is found in the centrosome. Its subcellular location is the centriole. Functionally, plays a role in spermatogenesis. When overexpressed, prevents nuclear localization of HIF1A. The protein is Testis-specific gene 10 protein (TSGA10) of Macaca fascicularis (Crab-eating macaque).